Consider the following 131-residue polypeptide: Large ribosomal subunit protein uL22 (131 aa).

Positions 1-11 are enriched in basic residues; the sequence is MAKGHRSKIKR. The disordered stretch occupies residues 1 to 20; that stretch reads MAKGHRSKIKRERNEVRDTR.

This sequence belongs to the universal ribosomal protein uL22 family. In terms of assembly, part of the 50S ribosomal subunit.

This protein binds specifically to 23S rRNA; its binding is stimulated by other ribosomal proteins, e.g. L4, L17, and L20. It is important during the early stages of 50S assembly. It makes multiple contacts with different domains of the 23S rRNA in the assembled 50S subunit and ribosome. Functionally, the globular domain of the protein is located near the polypeptide exit tunnel on the outside of the subunit, while an extended beta-hairpin is found that lines the wall of the exit tunnel in the center of the 70S ribosome. This Agathobacter rectalis (strain ATCC 33656 / DSM 3377 / JCM 17463 / KCTC 5835 / VPI 0990) (Eubacterium rectale) protein is Large ribosomal subunit protein uL22.